The primary structure comprises 117 residues: LIM and senescent cell antigen-like-containing domain protein 3 (117 aa).

The region spanning 70–117 is the LIM zinc-binding domain; sequence ATCERCKGGFAPAETIVNSNGELYHEQCFVCAQCFQQFPEGLFYEERT.

As to expression, detected in testis.

It localises to the cytoplasm. The polypeptide is LIM and senescent cell antigen-like-containing domain protein 3 (LIMS3) (Homo sapiens (Human)).